A 287-amino-acid chain; its full sequence is Acetyl-coenzyme A carboxylase carboxyl transferase subunit beta (287 aa).

In terms of domain architecture, CoA carboxyltransferase N-terminal spans 28–287 (LWKKCPKCEN…ILSLLTNKVA (260 aa)). C32, C35, C51, and C54 together coordinate Zn(2+). The segment at 32–54 (CPKCENVLYRPELEKNLDVCPKC) adopts a C4-type zinc-finger fold.

The protein belongs to the AccD/PCCB family. As to quaternary structure, acetyl-CoA carboxylase is a heterohexamer composed of biotin carboxyl carrier protein (AccB), biotin carboxylase (AccC) and two subunits each of ACCase subunit alpha (AccA) and ACCase subunit beta (AccD). Zn(2+) serves as cofactor.

Its subcellular location is the cytoplasm. It catalyses the reaction N(6)-carboxybiotinyl-L-lysyl-[protein] + acetyl-CoA = N(6)-biotinyl-L-lysyl-[protein] + malonyl-CoA. Its pathway is lipid metabolism; malonyl-CoA biosynthesis; malonyl-CoA from acetyl-CoA: step 1/1. In terms of biological role, component of the acetyl coenzyme A carboxylase (ACC) complex. Biotin carboxylase (BC) catalyzes the carboxylation of biotin on its carrier protein (BCCP) and then the CO(2) group is transferred by the transcarboxylase to acetyl-CoA to form malonyl-CoA. The polypeptide is Acetyl-coenzyme A carboxylase carboxyl transferase subunit beta (Marinomonas sp. (strain MWYL1)).